The chain runs to 677 residues: Methionine--tRNA ligase (677 aa).

The 'HIGH' region signature appears at 15 to 25 (PYANGSIHLGH). The Zn(2+) site is built by Cys146, Cys149, Cys159, and Cys162. Residues 333–337 (KMSKS) carry the 'KMSKS' region motif. An ATP-binding site is contributed by Lys336. Residues 575-677 (DFAKIDLRVA…DGAKPGQQVK (103 aa)) form the tRNA-binding domain.

The protein belongs to the class-I aminoacyl-tRNA synthetase family. MetG type 1 subfamily. In terms of assembly, homodimer. The cofactor is Zn(2+).

Its subcellular location is the cytoplasm. The catalysed reaction is tRNA(Met) + L-methionine + ATP = L-methionyl-tRNA(Met) + AMP + diphosphate. In terms of biological role, is required not only for elongation of protein synthesis but also for the initiation of all mRNA translation through initiator tRNA(fMet) aminoacylation. The polypeptide is Methionine--tRNA ligase (Salmonella paratyphi A (strain AKU_12601)).